We begin with the raw amino-acid sequence, 284 residues long: MSNSVTNFEMSSVLPGKKPCQGKNNESQVVQTTPIKKHSVTFKNQSSLGVIDHYARLTNKSHSSVIAEVVDLAIPILEKCNRHNWSINEIKNDLLKFSIKESINRSRGKTEVTLEEYCSLIWKTNIMSPLKIPIADYFQLNANDEFMGKDEKTVIRERLSSLRENYDMEKAIYIYNQRHFDVKHQSVSGYSNIILIHRTTFEGYYFDAGQALLLSTSQLIIFGINEVLRRKGIVMPYPVVCWIDIYHVNEMVVMLPVLRKTDVSNRVNVPDDIIINPYSQESRT.

Residues 1–10 (MSNSVTNFEM) are compositionally biased toward polar residues. The interval 1–28 (MSNSVTNFEMSSVLPGKKPCQGKNNESQ) is disordered.

This is an uncharacterized protein from Escherichia coli (strain K12).